Consider the following 264-residue polypeptide: Aminoglycoside 3'-phosphotransferase (264 aa).

The active-site Proton acceptor is D190.

The protein belongs to the aminoglycoside phosphotransferase family.

The enzyme catalyses kanamycin A + ATP = kanamycin 3'-phosphate + ADP + H(+). Resistance to kanamycin and structurally-related aminoglycosides, including amikacin. This chain is Aminoglycoside 3'-phosphotransferase (aphA), found in Enterococcus faecalis (Streptococcus faecalis).